Consider the following 204-residue polypeptide: Recombination protein RecR (204 aa).

Residues 58–75 (CTICQNITDVGTDPCAIC) form a C4-type zinc finger. Positions 83 to 181 (TVICVVESPV…AVTKIARGIP (99 aa)) constitute a Toprim domain.

The protein belongs to the RecR family.

In terms of biological role, may play a role in DNA repair. It seems to be involved in an RecBC-independent recombinational process of DNA repair. It may act with RecF and RecO. The chain is Recombination protein RecR from Chlorobium chlorochromatii (strain CaD3).